A 340-amino-acid polypeptide reads, in one-letter code: Dihydroorotate dehydrogenase (quinone) (340 aa).

FMN contacts are provided by residues 67–71 and T91; that span reads AGFDK. K71 is a substrate binding site. 116–120 provides a ligand contact to substrate; the sequence is NRMGF. FMN contacts are provided by N143 and N176. Substrate is bound at residue N176. S179 (nucleophile) is an active-site residue. N181 is a binding site for substrate. FMN-binding residues include K217 and T245. 246–247 contributes to the substrate binding site; sequence NT. FMN contacts are provided by residues G267, G296, and 317–318; that span reads YT.

This sequence belongs to the dihydroorotate dehydrogenase family. Type 2 subfamily. In terms of assembly, monomer. The cofactor is FMN.

The protein resides in the cell membrane. The enzyme catalyses (S)-dihydroorotate + a quinone = orotate + a quinol. It participates in pyrimidine metabolism; UMP biosynthesis via de novo pathway; orotate from (S)-dihydroorotate (quinone route): step 1/1. Functionally, catalyzes the conversion of dihydroorotate to orotate with quinone as electron acceptor. The sequence is that of Dihydroorotate dehydrogenase (quinone) from Christiangramia forsetii (strain DSM 17595 / CGMCC 1.15422 / KT0803) (Gramella forsetii).